The following is a 316-amino-acid chain: Methionyl-tRNA formyltransferase (316 aa).

110–113 provides a ligand contact to (6S)-5,6,7,8-tetrahydrofolate; the sequence is SLLP.

The protein belongs to the Fmt family.

It catalyses the reaction L-methionyl-tRNA(fMet) + (6R)-10-formyltetrahydrofolate = N-formyl-L-methionyl-tRNA(fMet) + (6S)-5,6,7,8-tetrahydrofolate + H(+). Attaches a formyl group to the free amino group of methionyl-tRNA(fMet). The formyl group appears to play a dual role in the initiator identity of N-formylmethionyl-tRNA by promoting its recognition by IF2 and preventing the misappropriation of this tRNA by the elongation apparatus. The sequence is that of Methionyl-tRNA formyltransferase from Halothermothrix orenii (strain H 168 / OCM 544 / DSM 9562).